The chain runs to 477 residues: Protein kinase C and casein kinase substrate in neurons protein 2 (477 aa).

In terms of domain architecture, F-BAR spans 11–282 (VEVSSDSFWE…AIKSADAMED (272 aa)). Residues 25–274 (KRTVKRIDDG…SIYRELEYAI (250 aa)) are a coiled coil. Composition is skewed to basic and acidic residues over residues 163–176 (CKEEKLATSRETNS) and 186–216 (QLKKLQDKVEKSKQDSQKTKEKYEKSLKDLD). 2 disordered regions span residues 163–218 (CKEE…LDGT) and 314–412 (RREK…PFDE). Residues 328-341 (GISQSGEQSSIQNQ) show a composition bias toward low complexity. The segment covering 342 to 357 (HSSHLSVQSAQSTNNP) has biased composition (polar residues). The NPF1 motif lies at 356-358 (NPF). Positions 370–388 (TENKKIENVGSYEKTHPAE) are enriched in basic and acidic residues. Over residues 395 to 407 (NNPFNPSDTNGDN) the composition is skewed to polar residues. Residues 396–398 (NPF) carry the NPF2 motif. Residues 408-410 (NPF) carry the NPF3 motif. Positions 417-477 (TLEVRVRALY…YPANYVESVQ (61 aa)) constitute an SH3 domain.

This sequence belongs to the PACSIN family. As to quaternary structure, interacts with adam13 through the SH3 domains. Post-translationally, phosphorylated. Ubiquitously expressed with higher expression in the ectoderm, the neuroectoderm, and dorsal mesoderm layers.

The protein resides in the cytoplasm. It localises to the cytoskeleton. It is found in the cytoplasmic vesicle membrane. The protein localises to the cell projection. Its subcellular location is the ruffle membrane. The protein resides in the early endosome. It localises to the recycling endosome membrane. It is found in the cell membrane. The protein localises to the membrane. Its subcellular location is the caveola. The protein resides in the cell junction. It localises to the adherens junction. Regulates the morphogenesis and endocytosis of caveolae. Lipid-binding protein that is able to promote the tubulation of the phosphatidic acid-containing membranes it preferentially binds. Plays a role in intracellular vesicle-mediated transport. Involved in the endocytosis of cell-surface receptors like the EGF receptor, contributing to its internalization in the absence of EGF stimulus. This Xenopus laevis (African clawed frog) protein is Protein kinase C and casein kinase substrate in neurons protein 2 (pacsin2).